The chain runs to 193 residues: Frataxin, mitochondrial (193 aa).

Residues 1-72 (MIFNFLNKAS…KQQQQLSKSF (72 aa)) constitute a mitochondrion transit peptide.

The protein belongs to the frataxin family. As to quaternary structure, monomer. Oligomer.

It localises to the mitochondrion. The catalysed reaction is 4 Fe(2+) + O2 + 4 H(+) = 4 Fe(3+) + 2 H2O. In terms of biological role, promotes the biosynthesis of heme as well as the assembly and repair of iron-sulfur clusters by delivering Fe(2+) to proteins involved in these pathways. May play a role in the protection against iron-catalyzed oxidative stress through its ability to catalyze the oxidation of Fe(2+) to Fe(3+). May be able to store large amounts of the metal in the form of a ferrihydrite mineral by oligomerization. This chain is Frataxin, mitochondrial (fxn), found in Dictyostelium discoideum (Social amoeba).